A 125-amino-acid polypeptide reads, in one-letter code: Small ribosomal subunit protein uS12 (125 aa).

The segment at 1 to 30 is disordered; it reads MPTISQLVRKPRAAKPLKSKVPALGNSPQK. The segment covering 9–18 has biased composition (basic residues); it reads RKPRAAKPLK. Position 89 is a 3-methylthioaspartic acid (aspartate 89). Residues 103-125 are disordered; sequence DTAGVKDRKQGRSKYGAKKPKSA. Residues 113–125 show a composition bias toward basic residues; it reads GRSKYGAKKPKSA.

This sequence belongs to the universal ribosomal protein uS12 family. In terms of assembly, part of the 30S ribosomal subunit. Contacts proteins S8 and S17. May interact with IF1 in the 30S initiation complex.

Its function is as follows. With S4 and S5 plays an important role in translational accuracy. Interacts with and stabilizes bases of the 16S rRNA that are involved in tRNA selection in the A site and with the mRNA backbone. Located at the interface of the 30S and 50S subunits, it traverses the body of the 30S subunit contacting proteins on the other side and probably holding the rRNA structure together. The combined cluster of proteins S8, S12 and S17 appears to hold together the shoulder and platform of the 30S subunit. In Nitrosospira multiformis (strain ATCC 25196 / NCIMB 11849 / C 71), this protein is Small ribosomal subunit protein uS12.